Reading from the N-terminus, the 1111-residue chain is RecBCD enzyme subunit RecC (1111 aa).

This sequence belongs to the RecC family. As to quaternary structure, heterotrimer of RecB, RecC and RecD. All subunits contribute to DNA-binding.

Its function is as follows. A helicase/nuclease that prepares dsDNA breaks (DSB) for recombinational DNA repair. Binds to DSBs and unwinds DNA via a highly rapid and processive ATP-dependent bidirectional helicase activity. Unwinds dsDNA until it encounters a Chi (crossover hotspot instigator) sequence from the 3' direction. Cuts ssDNA a few nucleotides 3' to the Chi site. The properties and activities of the enzyme are changed at Chi. The Chi-altered holoenzyme produces a long 3'-ssDNA overhang and facilitates RecA-binding to the ssDNA for homologous DNA recombination and repair. Holoenzyme degrades any linearized DNA that is unable to undergo homologous recombination. In the holoenzyme this subunit recognizes the wild-type Chi sequence, and when added to isolated RecB increases its ATP-dependent helicase processivity. This Buchnera aphidicola subsp. Baizongia pistaciae (strain Bp) protein is RecBCD enzyme subunit RecC.